A 598-amino-acid polypeptide reads, in one-letter code: Integrator complex subunit 11 (598 aa).

Residues His68, His70, Asp72, His73, His157, and Asp178 each contribute to the Zn(2+) site. The short motif at 68 to 73 (HFHLDH) is the HXHXDH motif element. Glu203 is an active-site residue. Position 414 (His414) interacts with Zn(2+). Positions 470-480 (PLPDAKRPRTM) match the Nuclear localization signal motif.

Belongs to the metallo-beta-lactamase superfamily. RNA-metabolizing metallo-beta-lactamase-like family. INTS11 subfamily. In terms of assembly, component of the Integrator complex, composed of core subunits INTS1, INTS2, INTS3, INTS4, INTS5, INTS6, INTS7, INTS8, INTS9/RC74, INTS10, INTS11/CPSF3L, INTS12, INTS13, INTS14 and INTS15. The core complex associates with protein phosphatase 2A subunits PPP2CA and PPP2R1A, to form the Integrator-PP2A (INTAC) complex. INTS11 is part of the RNA endonuclease subcomplex, composed of INTS4, INTS9, INTS11 and inositol hexakisphosphate (InsP6). Zn(2+) serves as cofactor.

The protein localises to the nucleus. The protein resides in the cytoplasm. RNA endonuclease component of the integrator complex, a multiprotein complex that terminates RNA polymerase II (Pol II) transcription in the promoter-proximal region of genes. The integrator complex provides a quality checkpoint during transcription elongation by driving premature transcription termination of transcripts that are unfavorably configured for transcriptional elongation: the complex terminates transcription by (1) catalyzing dephosphorylation of the C-terminal domain (CTD) of Pol II subunit POLR2A/RPB1 and SUPT5H/SPT5, (2) degrading the exiting nascent RNA transcript via endonuclease activity and (3) promoting the release of Pol II from bound DNA. The integrator complex is also involved in terminating the synthesis of non-coding Pol II transcripts, such as enhancer RNAs (eRNAs), small nuclear RNAs (snRNAs), telomerase RNAs and long non-coding RNAs (lncRNAs). Within the integrator complex, INTS11 constitutes the RNA endonuclease subunit that degrades exiting nascent RNA transcripts. This chain is Integrator complex subunit 11 (cpsf3l), found in Danio rerio (Zebrafish).